Consider the following 127-residue polypeptide: Fluoride-specific ion channel FluC (127 aa).

The next 4 membrane-spanning stretches (helical) occupy residues 4–24, 39–59, 68–88, and 102–122; these read LDYLTIAFGGAIGAVLRYLVS, GTIIVNSVGSFFLSFLMFAAI, AILFFGTGLLGAFTTFSTFTY, and VAYALVNLLFAFTCAYFGMIL. Na(+) is bound by residues Gly78 and Thr81.

Belongs to the fluoride channel Fluc/FEX (TC 1.A.43) family.

It is found in the cell inner membrane. The catalysed reaction is fluoride(in) = fluoride(out). Na(+) is not transported, but it plays an essential structural role and its presence is essential for fluoride channel function. Fluoride-specific ion channel. Important for reducing fluoride concentration in the cell, thus reducing its toxicity. The chain is Fluoride-specific ion channel FluC from Thermotoga petrophila (strain ATCC BAA-488 / DSM 13995 / JCM 10881 / RKU-1).